The chain runs to 89 residues: Small ribosomal subunit protein uS15 (89 aa).

Over residues 1–11 (MSITAERKAEV) the composition is skewed to basic and acidic residues. Positions 1 to 25 (MSITAERKAEVIKTNARKSGDTGSP) are disordered.

Belongs to the universal ribosomal protein uS15 family. In terms of assembly, part of the 30S ribosomal subunit. Forms a bridge to the 50S subunit in the 70S ribosome, contacting the 23S rRNA.

Its function is as follows. One of the primary rRNA binding proteins, it binds directly to 16S rRNA where it helps nucleate assembly of the platform of the 30S subunit by binding and bridging several RNA helices of the 16S rRNA. Functionally, forms an intersubunit bridge (bridge B4) with the 23S rRNA of the 50S subunit in the ribosome. The chain is Small ribosomal subunit protein uS15 from Nitrobacter hamburgensis (strain DSM 10229 / NCIMB 13809 / X14).